The chain runs to 566 residues: Amino acid transporter 6-1 (566 aa).

Helical transmembrane passes span 65 to 85 (YVLLLLYSIVVFTTGAVFYGW), 137 to 157 (MTFAVACLMSAGAGTLLDWLG), 158 to 178 (PLWTELLGQLLNLVGWLFLAF), 187 to 207 (YPALVFIGLGADASMLPTLCI), 216 to 236 (GLIITILGSAASASFGIPLVL), 250 to 270 (VSIGYCFFGPVLGVLVALLFM), 334 to 354 (FFSIRYFLIVLYFVVVSWATS), 367 to 387 (DVVSVIEVLLPLSFIPCILLG), 392 to 412 (VVGIIRVLFVMNTSGLLTYVF), 423 to 443 (LSACCFMVYMSLLTSQVYVYV), and 455 to 475 (LIGISNLTGGLLSLVSNPLYE). N-linked (GlcNAc...) asparagine glycosylation occurs at N476. A helical membrane pass occupies residues 489–509 (IQIAMTALLCVQYVWIFILGF).

This sequence belongs to the SLC43A transporter (TC 2.A.1.44) family.

It is found in the cell membrane. The enzyme catalyses L-lysine(in) = L-lysine(out). It carries out the reaction L-arginine(in) = L-arginine(out). It catalyses the reaction L-methionine(in) = L-methionine(out). The catalysed reaction is L-leucine(in) = L-leucine(out). In terms of biological role, cationic and neutral amino acid transporter. Transports lysine with high affinity. Can transport arginine, methionine and leucine. Does not require inorganic ions, such as sodium, chloride, potassium, calcium or magnesium, for transport activity. This chain is Amino acid transporter 6-1, found in Toxoplasma gondii (strain ATCC 50611 / Me49).